A 207-amino-acid polypeptide reads, in one-letter code: dTTP/UTP pyrophosphatase (207 aa).

Asp-79 serves as the catalytic Proton acceptor.

The protein belongs to the Maf family. YhdE subfamily. It depends on a divalent metal cation as a cofactor.

Its subcellular location is the cytoplasm. It catalyses the reaction dTTP + H2O = dTMP + diphosphate + H(+). The catalysed reaction is UTP + H2O = UMP + diphosphate + H(+). Its function is as follows. Nucleoside triphosphate pyrophosphatase that hydrolyzes dTTP and UTP. May have a dual role in cell division arrest and in preventing the incorporation of modified nucleotides into cellular nucleic acids. The polypeptide is dTTP/UTP pyrophosphatase (Rhodopseudomonas palustris (strain BisB18)).